A 387-amino-acid polypeptide reads, in one-letter code: MDMNSFSPMMPTSPLSMINQIKFEDEPDLKDLFITVDEPESHVTTIETFITYRIITKTSRGEFDSSEFEVRRRYQDFLWLKGKLEEAHPTLIIPPLPEKFIVKGMVERFNDDFIETRRKALHKFLNRIADHPTLTFNEDFKIFLTAQAWELSSHKKQGPGLLSRMGQTVRAVASSMRGVKNRPEEFMEMNNFIELFSQKINLIDKISQRIYKEEREYFDEMKEYGPIHILWSASEEDLVDTLKDVASCIDRCCKATEKRMSGLSEALLPVVHEYVLYSEMLMGVMKRRDQIQAELDSKVEVLTYKKADTDLLPEEIGKLEDKVECANNALKADWERWKQNMQNDIKLAFTDMAEENIHYYEQCLATWESFLTSQTNLHLEEASEDKP.

Residues lysine 30–leucine 151 enclose the PX domain. Residues arginine 73, glutamine 75, lysine 103, and arginine 117 each coordinate a 1,2-diacyl-sn-glycero-3-phospho-(1D-myo-inositol-3-phosphate). Residues glycine 178 to proline 387 enclose the BAR domain.

The protein belongs to the sorting nexin family. Heterodimer; heterodimerizes with SNX4.

It localises to the early endosome membrane. Its function is as follows. Involved in the regulation of endocytosis and in several stages of intracellular trafficking. Together with SNX4, involved in autophagosome assembly by regulating trafficking and recycling of phospholipid scramblase ATG9A. This chain is Sorting nexin-7, found in Homo sapiens (Human).